A 119-amino-acid chain; its full sequence is DLFQFGGMIGCANKGARSWLSYVNYGCYCGWGGSGTPVDELDRCCQIHDNCYGEAEKKQCGPKMTSYSWKCANDVPVCNDSKSACKGFVCDCDAAAAKCFAKAPYNKNNIGIGSKTRCQ.

7 disulfide bridges follow: C11/C71, C27/C118, C29/C45, C44/C99, C51/C92, C60/C85, and C78/C90. The Ca(2+) site is built by Y28, G30, and G32. H48 is an active-site residue. Residue D49 participates in Ca(2+) binding. Residue D93 is part of the active site.

Ca(2+) serves as cofactor. In terms of tissue distribution, expressed by the venom gland.

It is found in the secreted. The catalysed reaction is a 1,2-diacyl-sn-glycero-3-phosphocholine + H2O = a 1-acyl-sn-glycero-3-phosphocholine + a fatty acid + H(+). Functionally, snake venom phospholipase A2 (PLA2) that potently inhibits ADP-(IC(50)=10 nM) and collagen-induced (IC(50)=7 nM) platelet aggregation when tested on human whole blood. PLA2 catalyzes the calcium-dependent hydrolysis of the 2-acyl groups in 3-sn-phosphoglycerides. In Acanthophis antarcticus (Common death adder), this protein is Basic phospholipase A2 acanthin-1.